A 147-amino-acid polypeptide reads, in one-letter code: MRGSELSLLLLALVLCQAPRGPAAPVSTGAGGGTVLAKMYPRGSHWAVGHLMGKKSTDELPPLYAADRDGLKEQLRGYIRWEEAARNLLGLLEAAGNRSHQPPQDQPLGSLQPTWDPEDGSYFSDAQNAKLVDSLLQVLKGKEGTAS.

The first 23 residues, 1 to 23 (MRGSELSLLLLALVLCQAPRGPA), serve as a signal peptide directing secretion. A Methionine amide modification is found at M52. The propeptide occupies 56-147 (STDELPPLYA…VLKGKEGTAS (92 aa)). The tract at residues 95-123 (AGNRSHQPPQDQPLGSLQPTWDPEDGSYF) is disordered. A compositionally biased stretch (polar residues) spans 98–113 (RSHQPPQDQPLGSLQP).

It belongs to the bombesin/neuromedin-B/ranatensin family. As to expression, expressed in several dozen cells in the dorsal retrotrapezoid nucleus/parafacial respiratory group (at protein level).

The protein localises to the secreted. It is found in the cytoplasmic vesicle. The protein resides in the secretory vesicle lumen. Its subcellular location is the cell projection. It localises to the neuron projection. In terms of biological role, stimulates the release of gastrin and other gastrointestinal hormones. Contributes to the perception of prurient stimuli and to the transmission of itch signals in the spinal cord that promote scratching behavior. Contributes primarily to nonhistaminergic itch sensation. In one study, shown to act in the amygdala as part of an inhibitory network which inhibits memory specifically related to learned fear. In another study, shown to act on vasoactive intestinal peptide (VIP)-expressing cells in the auditory cortex, most likely via extrasynaptic diffusion from local and long-range sources, to mediate disinhibition of glutamatergic cells via VIP cell-specific GRPR signaling which leads to enhanced auditory fear memories. Contributes to the regulation of food intake. Inhibits voltage-gated sodium channels but enhances voltage-gated potassium channels in hippocampal neurons. Induces sighing by acting directly on the pre-Botzinger complex, a cluster of several thousand neurons in the ventrolateral medulla responsible for inspiration during respiratory activity. Induces an itch response through activation of receptors present on mast cells, triggering mast cell degranulation. The protein is Gastrin-releasing peptide (Grp) of Rattus norvegicus (Rat).